The sequence spans 658 residues: MSQPLLRALFAPSSRSYVPAVLLSLALGIQAAHAENSGGNAFVPAGNQQEAHWTINLKDADIREFIDQISEITGETFVVDPRVKGQVSVVSKAQLSLSEVYQLFLSVMSTHGFTVVAQGDQARIVPNAEAKTEAGGGQSAPDRLETRVIQVQQSPVSELIPLIRPLVPQYGHLAAVPSANALIISDRSANIARIEDVIRQLDQKGSHDYSVINLRYGWVMDAAEVLNNAMSRGQAKGAAGAQVIADARTNRLIILGPPQARAKLVQLAQSLDTPTARSANTRVIRLRHNDAKTLAETLGQISEGMKNNGGQGGEQTGGGRPSNILIRADESTNALVLLADPDTVNALEDIVRQLDVPRAQVLVEAAIVEISGDIQDAVGVQWAINKGGMGGTKTNFANTGLSIGTLLQSLESNKAPESIPDGAIVGIGSSSFGALVTALSANTKSNLLSTPSLLTLDNQKAEILVGQNVPFQTGSYTTNSEGSSNPFTTVERKDIGVSLKVTPHINDGAALRLEIEQEISALLPNAQQRNNTDLITSKRSIKSTILAENGQVIVIGGLIQDDVSQAESKVPLLGDIPLLGRLFRSTKDTHTKRNLMVFLRPTVVRDSAGLAALSGKKYSDIRVIDGTRGPEGRPSILPTNANQLFDGQAVDLRELMTE.

An N-terminal signal peptide occupies residues 1–34; the sequence is MSQPLLRALFAPSSRSYVPAVLLSLALGIQAAHA. The N0 stretch occupies residues 51–141; sequence AHWTINLKDA…TEAGGGQSAP (91 aa). Residues 142–205 are N1; sequence DRLETRVIQV…DVIRQLDQKG (64 aa). Residues 206-279 are N2; it reads SHDYSVINLR…SLDTPTARSA (74 aa). Residues 280 to 365 are N3; the sequence is NTRVIRLRHN…VPRAQVLVEA (86 aa). Positions 302 to 322 are disordered; sequence SEGMKNNGGQGGEQTGGGRPS. The span at 307-320 shows a compositional bias: gly residues; that stretch reads NNGGQGGEQTGGGR. A secretin region spans residues 368–606; the sequence is VEISGDIQDA…VFLRPTVVRD (239 aa). Positions 608–658 are s domain; it reads AGLAALSGKKYSDIRVIDGTRGPEGRPSILPTNANQLFDGQAVDLRELMTE.

This sequence belongs to the bacterial secretin family. GSP D subfamily. As to quaternary structure, forms a cylindrical channel with 15 subunits. The closed pentadecameric channel is 170 Angstroms long and 140 Angstroms in diameter.

It is found in the cell outer membrane. Involved in a type II secretion system (T2SS, formerly general secretion pathway, GSP) for the export of proteins. This subunit forms the outer membrane channel. Among its substrates are PrpL, elastase LasB, chitin binding protein D (CbpD), aminopeptidase PaAP, and metalloprotease ImpA. In Pseudomonas aeruginosa (strain ATCC 15692 / DSM 22644 / CIP 104116 / JCM 14847 / LMG 12228 / 1C / PRS 101 / PAO1), this protein is Secretin XcpQ.